Here is a 257-residue protein sequence, read N- to C-terminus: ATP synthase subunit a (257 aa).

Positions 1 to 4 (MFIT) are cleaved as a propeptide — removed in mature form. Helical transmembrane passes span 27–47 (FSNF…LAII), 58–78 (IVPQ…LNLV), 93–113 (YFPF…LRLI), 122–142 (QLIF…ILGL), 149–169 (VFGL…LVLI), 189–209 (IIAG…FMGL), 214–234 (FIIG…EFGI), and 236–256 (FIQA…SLNL).

Belongs to the ATPase A chain family. F-type ATPases have 2 components, CF(1) - the catalytic core - and CF(0) - the membrane proton channel. CF(1) has five subunits: alpha(3), beta(3), gamma(1), delta(1), epsilon(1). CF(0) has three main subunits: a, b and c.

The protein localises to the mitochondrion inner membrane. In terms of biological role, mitochondrial membrane ATP synthase (F(1)F(0) ATP synthase or Complex V) produces ATP from ADP in the presence of a proton gradient across the membrane which is generated by electron transport complexes of the respiratory chain. F-type ATPases consist of two structural domains, F(1) - containing the extramembraneous catalytic core and F(0) - containing the membrane proton channel, linked together by a central stalk and a peripheral stalk. During catalysis, ATP synthesis in the catalytic domain of F(1) is coupled via a rotary mechanism of the central stalk subunits to proton translocation. Key component of the proton channel; it may play a direct role in the translocation of protons across the membrane. The protein is ATP synthase subunit a (atp6) of Schizosaccharomyces pombe (strain 972 / ATCC 24843) (Fission yeast).